The sequence spans 645 residues: Acetyl-coenzyme A synthetase (645 aa).

CoA contacts are provided by residues 190 to 193 (RGGR) and T308. ATP-binding positions include 384 to 386 (GEP), 408 to 413 (DTWWQT), D497, and R512. S520 serves as a coordination point for CoA. An ATP-binding site is contributed by R523. Mg(2+) is bound by residues V534, H536, and V539. K606 is subject to N6-acetyllysine.

The protein belongs to the ATP-dependent AMP-binding enzyme family. The cofactor is Mg(2+). Post-translationally, acetylated. Deacetylation by the SIR2-homolog deacetylase activates the enzyme.

It catalyses the reaction acetate + ATP + CoA = acetyl-CoA + AMP + diphosphate. Functionally, catalyzes the conversion of acetate into acetyl-CoA (AcCoA), an essential intermediate at the junction of anabolic and catabolic pathways. AcsA undergoes a two-step reaction. In the first half reaction, AcsA combines acetate with ATP to form acetyl-adenylate (AcAMP) intermediate. In the second half reaction, it can then transfer the acetyl group from AcAMP to the sulfhydryl group of CoA, forming the product AcCoA. The polypeptide is Acetyl-coenzyme A synthetase (Saccharophagus degradans (strain 2-40 / ATCC 43961 / DSM 17024)).